Consider the following 622-residue polypeptide: MEDSEPERKRARADEATAGGSRSEDEDEDDEDYVPYVPLRQRRQLLLQKLLQRRRKGATEEEQQDSGSEPRGDEDDIPLGPQSNVSLLDQHQHLKEKAEARKESAKEKQLKEEEKILESVAEGRALMSVKEMAKGITYDDPIKTSWTPPRYVLSMSEERHERVRKKYHILVEGDGIPPPIKSFKEMKFPAAILRGLKKKGILHPTPIQIQGIPTILSGRDMIGIAFTGSGKTLVFTLPVIMFCLEQEKRLPFSKREGPYGLIICPSRELARQTHGILEYYCRLLQEDSSPLLRCALCIGGMSVKEQMETIRHGVHMMVATPGRLMDLLQKKMVSLDICRYLALDEADRMIDMGFEGDIRTIFSYFKGQRQTLLFSATMPKKIQNFAKSALVKPVTINVGRAGAASLDVIQEVEYVKEEAKMVYLLECLQKTPPPVLIFAEKKADVDAIHEYLLLKGVEAVAIHGGKDQEERTKAIEAFREGKKDVLVATDVASKGLDFPAIQHVINYDMPEEIENYVHRIGRTGRSGNTGIATTFINKACDESVLMDLKALLLEAKQKVPPVLQVLHCGDESMLDIGGERGCAFCGGLGHRITDCPKLEAMQTKQVSNIGRKDYLAHSSMDF.

The segment covering 1-15 has biased composition (basic and acidic residues); that stretch reads MEDSEPERKRARADE. Disordered stretches follow at residues 1–39 and 51–84; these read MEDS…YVPL and LQRR…PQSN. Residue S4 is modified to Phosphoserine. Residue K9 is modified to N6-acetyllysine. Residue K9 forms a Glycyl lysine isopeptide (Lys-Gly) (interchain with G-Cter in ubiquitin) linkage. 2 positions are modified to phosphoserine: S21 and S23. The span at 24 to 33 shows a compositional bias: acidic residues; that stretch reads EDEDEDDEDY. Y33 is modified (phosphotyrosine). K115 participates in a covalent cross-link: Glycyl lysine isopeptide (Lys-Gly) (interchain with G-Cter in ubiquitin). The Q motif motif lies at 181-209; that stretch reads KSFKEMKFPAAILRGLKKKGILHPTPIQI. The Helicase ATP-binding domain occupies 212-396; sequence IPTILSGRDM…KSALVKPVTI (185 aa). 225-232 contacts ATP; that stretch reads AFTGSGKT. The short motif at 344–347 is the DEAD box element; the sequence is DEAD. A Helicase C-terminal domain is found at 407 to 567; sequence DVIQEVEYVK…KVPPVLQVLH (161 aa). Residue Y414 is modified to Phosphotyrosine. Glycyl lysine isopeptide (Lys-Gly) (interchain with G-Cter in SUMO2) cross-links involve residues K416 and K442. The segment at 580 to 597 adopts a CCHC-type zinc-finger fold; sequence RGCAFCGGLGHRITDCPK.

The protein belongs to the DEAD box helicase family. DDX41 subfamily. Identified in the spliceosome C complex. Interacts with ERCC6. Interacts with FAM50A. Interacts with STING1. Interacts with CGAS. Interacts with several spliceosomes components such as PRP19 or CDC5L. Post-translationally, acetylation at Lys-9 regulates the nuclear/cytoplasmic localization. In terms of processing, phosphorylated by BTK; phosphorylation induces binding to dsDNA and STING1. 'Lys-48'-linked ubiquitinated and degraded by TRIM21 leading to negative regulation of the innate immune response to intracellular dsDNA.

The protein resides in the nucleus. It is found in the cytoplasm. It catalyses the reaction ATP + H2O = ADP + phosphate + H(+). Functionally, multifunctional protein that participates in many aspects of cellular RNA metabolism. Plays pivotal roles in innate immune sensing and hematopoietic homeostasis. Recognizes foreign or self-nucleic acids generated during microbial infection, thereby initiating anti-pathogen responses. Mechanistically, phosphorylation by BTK allows binding to dsDNA leading to interaction with STING1. Modulates the homeostasis of dsDNA through its ATP-dependent DNA-unwinding activity and ATP-independent strand-annealing activity. In turn, induces STING1-mediated type I interferon and cytokine responses to DNA and DNA viruses. During murine leukemia virus infection, primarily senses the DNA/RNA hybrid generated at the first step of reverse transcription, while cGAS recognizes dsDNA generated at the next step and both are needed for the antiretroviral innate immune response. Selectively modulates the transcription of certain immunity-associated genes by regulating their alternative splicing. Binds to RNA (R)-loops, structures consisting of DNA/RNA hybrids and a displaced strand of DNA that occur during transcription, and prevents their accumulation, thereby maintaining genome stability. Also participates in pre-mRNA splicing, translational regulation and snoRNA processing, which is essential for ribosome biogenesis. This is Probable ATP-dependent RNA helicase DDX41 (Ddx41) from Mus musculus (Mouse).